We begin with the raw amino-acid sequence, 405 residues long: Replication factor C large subunit (405 aa).

47-54 (GPPGVGKT) is an ATP binding site.

The protein belongs to the activator 1 small subunits family. RfcL subfamily. As to quaternary structure, heteromultimer composed of small subunits (RfcS) and large subunits (RfcL).

In terms of biological role, part of the RFC clamp loader complex which loads the PCNA sliding clamp onto DNA. The chain is Replication factor C large subunit from Saccharolobus islandicus (strain L.S.2.15 / Lassen #1) (Sulfolobus islandicus).